A 540-amino-acid chain; its full sequence is Glucose-6-phosphate isomerase (540 aa).

The Proton donor role is filled by E350. Active-site residues include H381 and K503.

It belongs to the GPI family.

Its subcellular location is the cytoplasm. The enzyme catalyses alpha-D-glucose 6-phosphate = beta-D-fructose 6-phosphate. It functions in the pathway carbohydrate biosynthesis; gluconeogenesis. Its pathway is carbohydrate degradation; glycolysis; D-glyceraldehyde 3-phosphate and glycerone phosphate from D-glucose: step 2/4. Functionally, catalyzes the reversible isomerization of glucose-6-phosphate to fructose-6-phosphate. In Paraburkholderia phymatum (strain DSM 17167 / CIP 108236 / LMG 21445 / STM815) (Burkholderia phymatum), this protein is Glucose-6-phosphate isomerase.